The sequence spans 359 residues: Protein Wnt-5a (359 aa).

A signal peptide spans 1 to 20 (MASRYLTLAAALLASFLQVD). A disulfide bridge links cysteine 83 with cysteine 94. 2 N-linked (GlcNAc...) asparagine glycosylation sites follow: asparagine 93 and asparagine 99. 10 disulfide bridges follow: cysteine 133/cysteine 141, cysteine 143/cysteine 161, cysteine 217/cysteine 231, cysteine 219/cysteine 226, cysteine 288/cysteine 319, cysteine 304/cysteine 314, cysteine 318/cysteine 358, cysteine 334/cysteine 349, cysteine 336/cysteine 346, and cysteine 341/cysteine 342. Serine 223 carries the O-palmitoleoyl serine; by PORCN lipid modification. N-linked (GlcNAc...) asparagine glycosylation is found at asparagine 291 and asparagine 305.

Belongs to the Wnt family. In terms of processing, palmitoleoylation is required for efficient binding to frizzled receptors. Depalmitoleoylation leads to Wnt signaling pathway inhibition.

Its subcellular location is the secreted. The protein resides in the extracellular space. The protein localises to the extracellular matrix. Functionally, ligand for members of the frizzled family of seven transmembrane receptors. Can activate or inhibit canonical Wnt signaling, depending on receptor context. Required during embryogenesis for extension of the primary anterior-posterior axis. The protein is Protein Wnt-5a (WNT5A) of Pleurodeles waltl (Iberian ribbed newt).